Consider the following 498-residue polypeptide: UDP-N-acetylmuramate--L-alanine ligase (498 aa).

133–139 (GSSGKTT) provides a ligand contact to ATP.

This sequence belongs to the MurCDEF family.

Its subcellular location is the cytoplasm. It catalyses the reaction UDP-N-acetyl-alpha-D-muramate + L-alanine + ATP = UDP-N-acetyl-alpha-D-muramoyl-L-alanine + ADP + phosphate + H(+). It functions in the pathway cell wall biogenesis; peptidoglycan biosynthesis. Cell wall formation. The chain is UDP-N-acetylmuramate--L-alanine ligase from Wolbachia pipientis wMel.